The chain runs to 105 residues: Dicamba O-demethylase, ferredoxin component (105 aa).

Positions 2-105 constitute a 2Fe-2S ferredoxin-type domain; that stretch reads PQITVVNQSG…GIKVTIAQED (104 aa). Residues Cys-40, Cys-46, Cys-49, and Cys-86 each contribute to the [2Fe-2S] cluster site.

The protein belongs to the adrenodoxin/putidaredoxin family. As to quaternary structure, monomer. The dicamba O-demethylase multicomponent enzyme system is composed of an oxygenase component (DdmC) and an electron transfer component formed by a ferredoxin reductase (DdmA1) and a ferredoxin (DdmB). In vitro, dicamba O-demethylase assays in which DdmA2 is substituted for DdmA1 demonstrate that the two enzymes possess nearly identical activities. Requires [2Fe-2S] cluster as cofactor.

Its function is as follows. Component of the dicamba O-demethylase multicomponent enzyme system involved in the degradation of the herbicide dicamba. In vitro, functions as an intermediate electron transfer protein. The chain is Dicamba O-demethylase, ferredoxin component from Stenotrophomonas maltophilia (Pseudomonas maltophilia).